A 172-amino-acid polypeptide reads, in one-letter code: Adenine phosphoribosyltransferase (172 aa).

It belongs to the purine/pyrimidine phosphoribosyltransferase family. Homodimer.

It is found in the cytoplasm. It carries out the reaction AMP + diphosphate = 5-phospho-alpha-D-ribose 1-diphosphate + adenine. Its pathway is purine metabolism; AMP biosynthesis via salvage pathway; AMP from adenine: step 1/1. Catalyzes a salvage reaction resulting in the formation of AMP, that is energically less costly than de novo synthesis. This is Adenine phosphoribosyltransferase from Polynucleobacter necessarius subsp. necessarius (strain STIR1).